We begin with the raw amino-acid sequence, 213 residues long: ATP synthase peripheral stalk subunit OSCP, mitochondrial (213 aa).

A mitochondrion-targeting transit peptide spans 1–23; that stretch reads MAAPAVSGLSRQVRCFSTSVVRP. The SIFI-degron motif lies at 5–23; it reads AVSGLSRQVRCFSTSVVRP. N6-acetyllysine occurs at positions 54, 60, 70, and 73. An N6-succinyllysine modification is found at lysine 90. Residues lysine 158 and lysine 162 each carry the N6-acetyllysine; alternate modification. 2 positions are modified to N6-succinyllysine; alternate: lysine 158 and lysine 162. N6-acetyllysine is present on residues lysine 172, lysine 176, and lysine 192. Lysine 199 is modified (N6-succinyllysine).

The protein belongs to the ATPase delta chain family. As to quaternary structure, component of the ATP synthase complex composed at least of ATP5F1A/subunit alpha, ATP5F1B/subunit beta, ATP5MC1/subunit c (homooctomer), MT-ATP6/subunit a, MT-ATP8/subunit 8, ATP5ME/subunit e, ATP5MF/subunit f, ATP5MG/subunit g, ATP5MK/subunit k, ATP5MJ/subunit j, ATP5F1C/subunit gamma, ATP5F1D/subunit delta, ATP5F1E/subunit epsilon, ATP5PF/subunit F6, ATP5PB/subunit b, ATP5PD/subunit d, ATP5PO/subunit OSCP. ATP synthase complex consists of a soluble F(1) head domain (subunits alpha(3) and beta(3)) - the catalytic core - and a membrane F(0) domain - the membrane proton channel (subunits c, a, 8, e, f, g, k and j). These two domains are linked by a central stalk (subunits gamma, delta, and epsilon) rotating inside the F1 region and a stationary peripheral stalk (subunits F6, b, d, and OSCP). Acetylation at Lys-162 decreases ATP production. Deacetylated by SIRT3. In terms of processing, in response to mitochondrial stress, the precursor protein is ubiquitinated by the SIFI complex in the cytoplasm before mitochondrial import, leading to its degradation. Within the SIFI complex, UBR4 initiates ubiquitin chain that are further elongated or branched by KCMF1.

The protein resides in the mitochondrion. The protein localises to the mitochondrion inner membrane. Its function is as follows. Subunit OSCP, of the mitochondrial membrane ATP synthase complex (F(1)F(0) ATP synthase or Complex V) that produces ATP from ADP in the presence of a proton gradient across the membrane which is generated by electron transport complexes of the respiratory chain. ATP synthase complex consist of a soluble F(1) head domain - the catalytic core - and a membrane F(1) domain - the membrane proton channel. These two domains are linked by a central stalk rotating inside the F(1) region and a stationary peripheral stalk. During catalysis, ATP synthesis in the catalytic domain of F(1) is coupled via a rotary mechanism of the central stalk subunits to proton translocation. In vivo, can only synthesize ATP although its ATP hydrolase activity can be activated artificially in vitro. Part of the complex F(0) domain. Part of the complex F(0) domain and the peripheric stalk, which acts as a stator to hold the catalytic alpha(3)beta(3) subcomplex and subunit a/ATP6 static relative to the rotary elements. This is ATP synthase peripheral stalk subunit OSCP, mitochondrial from Homo sapiens (Human).